Here is a 289-residue protein sequence, read N- to C-terminus: Cbb3-type cytochrome c oxidase subunit FixP (289 aa).

Over methionine 1–arginine 33 the chain is Cytoplasmic. Residues tryptophan 34 to tryptophan 56 traverse the membrane as a helical segment. Residues proline 57–glutamate 289 are Periplasmic-facing. 2 Cytochrome c domains span residues phenylalanine 110–threonine 198 and histidine 205–glycine 286. Residues cysteine 123, cysteine 126, histidine 127, methionine 175, cysteine 218, cysteine 221, histidine 222, and methionine 263 each contribute to the heme c site.

It belongs to the CcoP / FixP family. In terms of assembly, component of the cbb3-type cytochrome c oxidase at least composed of FixN, FixO, FixQ and FixP. The cofactor is heme c.

Its subcellular location is the cell inner membrane. The protein operates within energy metabolism; oxidative phosphorylation. In terms of biological role, C-type cytochrome. Part of the cbb3-type cytochrome c oxidase complex. FixP subunit is required for transferring electrons from donor cytochrome c via its heme groups to FixO subunit. From there, electrons are shuttled to the catalytic binuclear center of FixN subunit where oxygen reduction takes place. The complex also functions as a proton pump. The chain is Cbb3-type cytochrome c oxidase subunit FixP from Rhizobium meliloti (strain 1021) (Ensifer meliloti).